Consider the following 406-residue polypeptide: Erythromycin esterase type I (406 aa).

Its function is as follows. This enzyme confers resistance to erythromycin through inactivation by hydrolyzing the lactone ring of the antibiotic. The sequence is that of Erythromycin esterase type I (ereA) from Escherichia coli.